Here is a 110-residue protein sequence, read N- to C-terminus: UPF0122 protein BCAH187_A3894 (110 aa).

The protein belongs to the UPF0122 family.

Its function is as follows. Might take part in the signal recognition particle (SRP) pathway. This is inferred from the conservation of its genetic proximity to ftsY/ffh. May be a regulatory protein. In Bacillus cereus (strain AH187), this protein is UPF0122 protein BCAH187_A3894.